The primary structure comprises 511 residues: Bifunctional purine biosynthesis protein PurH (511 aa).

The MGS-like domain maps to 1–145 (MKKRALVSVS…KNHKFVSVIV (145 aa)).

It belongs to the PurH family.

It carries out the reaction (6R)-10-formyltetrahydrofolate + 5-amino-1-(5-phospho-beta-D-ribosyl)imidazole-4-carboxamide = 5-formamido-1-(5-phospho-D-ribosyl)imidazole-4-carboxamide + (6S)-5,6,7,8-tetrahydrofolate. The catalysed reaction is IMP + H2O = 5-formamido-1-(5-phospho-D-ribosyl)imidazole-4-carboxamide. Its pathway is purine metabolism; IMP biosynthesis via de novo pathway; 5-formamido-1-(5-phospho-D-ribosyl)imidazole-4-carboxamide from 5-amino-1-(5-phospho-D-ribosyl)imidazole-4-carboxamide (10-formyl THF route): step 1/1. The protein operates within purine metabolism; IMP biosynthesis via de novo pathway; IMP from 5-formamido-1-(5-phospho-D-ribosyl)imidazole-4-carboxamide: step 1/1. In Bacillus cereus (strain Q1), this protein is Bifunctional purine biosynthesis protein PurH.